Consider the following 342-residue polypeptide: Isopentenyl-diphosphate delta-isomerase (342 aa).

11 to 12 (RK) lines the substrate pocket. FMN-binding positions include Ser-68, 69 to 71 (SMT), Ser-99, and Asn-127. Residue 99 to 101 (SMR) coordinates substrate. Position 162 (Gln-162) interacts with substrate. Residue Glu-163 participates in Mg(2+) binding. FMN-binding positions include Lys-194, Thr-224, 274 to 276 (GLK), and 295 to 296 (AG).

This sequence belongs to the IPP isomerase type 2 family. In terms of assembly, homooctamer. Dimer of tetramers. FMN serves as cofactor. It depends on NADPH as a cofactor. Mg(2+) is required as a cofactor.

Its subcellular location is the cytoplasm. It carries out the reaction isopentenyl diphosphate = dimethylallyl diphosphate. Functionally, involved in the biosynthesis of isoprenoids. Catalyzes the 1,3-allylic rearrangement of the homoallylic substrate isopentenyl (IPP) to its allylic isomer, dimethylallyl diphosphate (DMAPP). This Rickettsia africae (strain ESF-5) protein is Isopentenyl-diphosphate delta-isomerase.